A 659-amino-acid chain; its full sequence is Threonine--tRNA ligase (659 aa).

A TGS domain is found at 3–64; it reads EKIRITLIDN…LEDGRLEIIT (62 aa). The segment at 249–555 is catalytic; that stretch reads DHRRLGQEMD…LIEHHAGRFP (307 aa). Residues C354, H405, and H532 each coordinate Zn(2+).

The protein belongs to the class-II aminoacyl-tRNA synthetase family. Homodimer. The cofactor is Zn(2+).

The protein resides in the cytoplasm. The enzyme catalyses tRNA(Thr) + L-threonine + ATP = L-threonyl-tRNA(Thr) + AMP + diphosphate + H(+). In terms of biological role, catalyzes the attachment of threonine to tRNA(Thr) in a two-step reaction: L-threonine is first activated by ATP to form Thr-AMP and then transferred to the acceptor end of tRNA(Thr). Also edits incorrectly charged L-seryl-tRNA(Thr). In Zymomonas mobilis subsp. mobilis (strain ATCC 31821 / ZM4 / CP4), this protein is Threonine--tRNA ligase.